The following is a 404-amino-acid chain: Zinc transporter 10 (404 aa).

Positions 1–22 (MESSSSSSYIPFIRQIAASVSA) are cleaved as a signal peptide. The Extracellular portion of the chain corresponds to 23–49 (ASCDAVVGGGGDKDEECRDEAAALRLK). Residues 50-70 (MVAVAAILIAGAAGVAIPLVG) traverse the membrane as a helical segment. The Cytoplasmic portion of the chain corresponds to 71–86 (RRRRGGGGGGGGGASS). The helical transmembrane segment at 87-107 (GGLFVLAKAFAAGVILATGFV) threads the bilayer. The Extracellular portion of the chain corresponds to 108 to 129 (HMLHDAEHALSNPCLPHSPWRR). A helical membrane pass occupies residues 130 to 150 (FPFPGFVAMLAALATLVVDFV). The Cytoplasmic segment spans residues 151 to 248 (GTHFYERKHR…GHEEGPSARH (98 aa)). A helical membrane pass occupies residues 249–269 (VVVSQILELGIVSHSVIIGLS). The Extracellular portion of the chain corresponds to 270-280 (LGVSQSPCTIK). A helical transmembrane segment spans residues 281–301 (PLVAALSFHQFFEGFALGGCI). Over 302–311 (SEAQLKNFSA) the chain is Cytoplasmic. The helical transmembrane segment at 312-332 (FLMAFFFAITTPAGITVGAAV) threads the bilayer. Residues 333-343 (ASFYNPNSPRA) are Extracellular-facing. Residues 344 to 364 (LVVEGILDSMSAGILIYMALV) form a helical membrane-spanning segment. The Cytoplasmic portion of the chain corresponds to 365-383 (DLIAADFLSRKMSCNPRLQ). Residues 384 to 404 (VGSYIALFLGAMAMAALALWA) traverse the membrane as a helical segment.

This sequence belongs to the ZIP transporter (TC 2.A.5) family.

The protein resides in the cell membrane. In terms of biological role, zinc transporter that may be involved in zinc uptake from the rhizosphere. This is Zinc transporter 10 (ZIP10) from Oryza sativa subsp. japonica (Rice).